Reading from the N-terminus, the 296-residue chain is Light-independent protochlorophyllide reductase iron-sulfur ATP-binding protein (296 aa).

ATP is bound by residues 10–15 (GIGKST) and Lys-39. Position 14 (Ser-14) interacts with Mg(2+). [4Fe-4S] cluster contacts are provided by Cys-95 and Cys-129. Residue 180 to 181 (NR) participates in ATP binding.

Belongs to the NifH/BchL/ChlL family. In terms of assembly, homodimer. Protochlorophyllide reductase is composed of three subunits; ChlL, ChlN and ChlB. Requires [4Fe-4S] cluster as cofactor.

The protein localises to the plastid. Its subcellular location is the chloroplast. The enzyme catalyses chlorophyllide a + oxidized 2[4Fe-4S]-[ferredoxin] + 2 ADP + 2 phosphate = protochlorophyllide a + reduced 2[4Fe-4S]-[ferredoxin] + 2 ATP + 2 H2O. It functions in the pathway porphyrin-containing compound metabolism; chlorophyll biosynthesis (light-independent). Component of the dark-operative protochlorophyllide reductase (DPOR) that uses Mg-ATP and reduced ferredoxin to reduce ring D of protochlorophyllide (Pchlide) to form chlorophyllide a (Chlide). This reaction is light-independent. The L component serves as a unique electron donor to the NB-component of the complex, and binds Mg-ATP. The polypeptide is Light-independent protochlorophyllide reductase iron-sulfur ATP-binding protein (Chlorokybus atmophyticus (Soil alga)).